The chain runs to 270 residues: Non-structural maintenance of chromosomes element 1 homolog (270 aa).

The RING-type; atypical zinc finger occupies 185–226 (CNVCRKVAIQSQLCENCGIPLHLQCAGKYFHGKANPTCPNCN). Residues 236–270 (LNQVSSQGPSHSQTETVRGRNQRSKNTSTASRTSR) form a disordered region. Composition is skewed to polar residues over residues 237-251 (NQVS…QTET) and 259-270 (SKNTSTASRTSR).

It belongs to the NSE1 family. As to quaternary structure, component of the SMC5-SMC6 complex.

Its subcellular location is the nucleus. It localises to the chromosome. The protein resides in the telomere. The catalysed reaction is S-ubiquitinyl-[E2 ubiquitin-conjugating enzyme]-L-cysteine + [acceptor protein]-L-lysine = [E2 ubiquitin-conjugating enzyme]-L-cysteine + N(6)-ubiquitinyl-[acceptor protein]-L-lysine.. Its function is as follows. RING-type zinc finger-containing E3 ubiquitin ligase that assembles with melanoma antigen protein (MAGE) to catalyze the direct transfer of ubiquitin from E2 ubiquitin-conjugating enzyme to a specific substrate. Within MAGE-RING ubiquitin ligase complex, MAGE stimulates and specifies ubiquitin ligase activity likely through recruitment and/or stabilization of the E2 ubiquitin-conjugating enzyme at the E3:substrate complex. Involved in maintenance of genome integrity, DNA damage response and DNA repair. The sequence is that of Non-structural maintenance of chromosomes element 1 homolog (nsmce1) from Xenopus laevis (African clawed frog).